Reading from the N-terminus, the 452-residue chain is Mitochondrial import inner membrane translocase subunit TIM44 (452 aa).

A Phosphothreonine modification is found at Thr128. 166-173 (GGEKLGRT) is an ATP binding site. The residue at position 180 (Ser180) is a Phosphoserine. Lys217 is subject to N6-succinyllysine.

Belongs to the Tim44 family. In terms of assembly, probable component of the PAM complex at least composed of a mitochondrial HSP70 protein, GRPEL1 or GRPEL2, TIMM44, TIMM16/PAM16 and TIMM14/DNAJC19. The complex interacts with the TIMM23 component of the TIM23 complex. Interacts with SLC25A4/ANT1 and SLC25A5/ANT2; leading to inhibit the presequence translocase TIMM23, thereby promoting stabilization of PINK1.

Its subcellular location is the mitochondrion inner membrane. The protein localises to the mitochondrion matrix. Essential component of the PAM complex, a complex required for the translocation of transit peptide-containing proteins from the inner membrane into the mitochondrial matrix in an ATP-dependent manner. Recruits mitochondrial HSP70 to drive protein translocation into the matrix using ATP as an energy source. The protein is Mitochondrial import inner membrane translocase subunit TIM44 (TIMM44) of Homo sapiens (Human).